A 126-amino-acid chain; its full sequence is UPF0102 protein P9303_16141 (126 aa).

Belongs to the UPF0102 family.

This Prochlorococcus marinus (strain MIT 9303) protein is UPF0102 protein P9303_16141.